Consider the following 179-residue polypeptide: ATP synthase subunit delta (179 aa).

Belongs to the ATPase delta chain family. As to quaternary structure, F-type ATPases have 2 components, F(1) - the catalytic core - and F(0) - the membrane proton channel. F(1) has five subunits: alpha(3), beta(3), gamma(1), delta(1), epsilon(1). F(0) has three main subunits: a(1), b(2) and c(10-14). The alpha and beta chains form an alternating ring which encloses part of the gamma chain. F(1) is attached to F(0) by a central stalk formed by the gamma and epsilon chains, while a peripheral stalk is formed by the delta and b chains.

Its subcellular location is the cell membrane. In terms of biological role, f(1)F(0) ATP synthase produces ATP from ADP in the presence of a proton or sodium gradient. F-type ATPases consist of two structural domains, F(1) containing the extramembraneous catalytic core and F(0) containing the membrane proton channel, linked together by a central stalk and a peripheral stalk. During catalysis, ATP synthesis in the catalytic domain of F(1) is coupled via a rotary mechanism of the central stalk subunits to proton translocation. Functionally, this protein is part of the stalk that links CF(0) to CF(1). It either transmits conformational changes from CF(0) to CF(1) or is implicated in proton conduction. In Mycoplasmopsis pulmonis (strain UAB CTIP) (Mycoplasma pulmonis), this protein is ATP synthase subunit delta.